Reading from the N-terminus, the 803-residue chain is Leucine--tRNA ligase (803 aa).

Positions 40 to 51 match the 'HIGH' region motif; sequence PYPSGAGLHVGH. The 'KMSKS' region signature appears at 575–579; sequence KMSKS. An ATP-binding site is contributed by Lys578.

This sequence belongs to the class-I aminoacyl-tRNA synthetase family.

It is found in the cytoplasm. It catalyses the reaction tRNA(Leu) + L-leucine + ATP = L-leucyl-tRNA(Leu) + AMP + diphosphate. This is Leucine--tRNA ligase from Listeria monocytogenes serotype 4a (strain HCC23).